The following is a 1237-amino-acid chain: ATP-dependent RNA helicase DEAH13 (1237 aa).

2 disordered regions span residues 1–51 and 115–148; these read MASV…NSNV and AMQL…EPTT. Polar residues predominate over residues 24–38; it reads SNKMQDKLNSNNNTG. Over residues 131–143 the composition is skewed to acidic residues; that stretch reads SVEQNDNDDDSCM. The Helicase ATP-binding domain maps to 251 to 443; it reads MEAINRHPAV…KRLFPNIPPL (193 aa). Residue 264–271 participates in ATP binding; sequence GQTGCGKT. The short motif at 367-370 is the DEAH box element; sequence DEAH. The disordered stretch occupies residues 543–585; it reads DDDSNNQNSRFSSHGEDPSDIGDGNYDDDFEEEDMYESDEDRD. The span at 567-585 shows a compositional bias: acidic residues; the sequence is NYDDDFEEEDMYESDEDRD. The region spanning 605 to 776 is the Helicase C-terminal domain; that stretch reads ALRAAFNALA…GVILLMKSMN (172 aa). Residues 876-910 form a disordered region; it reads EKKNESKDADKTVKQEDKQRKKDRKEKIKAARDRF.

Belongs to the DEAD box helicase family. DEAH subfamily.

It catalyses the reaction ATP + H2O = ADP + phosphate + H(+). The polypeptide is ATP-dependent RNA helicase DEAH13 (Arabidopsis thaliana (Mouse-ear cress)).